A 361-amino-acid chain; its full sequence is Inner kinetochore subunit CNN1 (361 aa).

Residues methionine 1–proline 22 form a disordered region. Serine 2 carries the phosphoserine; by CDK1 modification. Residue threonine 14 is modified to Phosphothreonine; by CDK1 and MPS1. The residue at position 17 (serine 17) is a Phosphoserine; by CDK1 and MPS1. Phosphothreonine; by CDK1 occurs at positions 21 and 42. A Phosphoserine; by CDK1 and MPS1 modification is found at serine 50. Residue serine 52 is modified to Phosphoserine; by CDK1. Threonine 53 is modified (phosphothreonine; by MPS1). Serine 55 bears the Phosphoserine; by CDK1 mark. The interacts with the NDC80 complex subunits SPC24 and SPC25 and with the KNL1 complex stretch occupies residues asparagine 60–asparagine 84. A Phosphoserine; by CDK1 and MPS1 modification is found at serine 74. A phosphothreonine; by MPS1 mark is found at threonine 86 and threonine 88. Threonine 91 carries the phosphothreonine; by CDK1 and MPS1 modification. The segment at glutamate 103–aspartate 132 is disordered. Basic and acidic residues predominate over residues glutamate 111 to threonine 121. At serine 115 the chain carries Phosphoserine; by CDK1. The span at aspartate 122–aspartate 132 shows a compositional bias: polar residues. Threonine 129 carries the phosphothreonine; by CDK1 and MPS1 modification. Position 134 is a phosphothreonine; by MPS1 (threonine 134). Phosphoserine; by MPS1 is present on serine 135. The residue at position 139 (threonine 139) is a Phosphothreonine; by CDK1 and MPS1. The residue at position 153 (serine 153) is a Phosphoserine; by MPS1. Threonine 174 is subject to Phosphothreonine; by MPS1. The residue at position 177 (serine 177) is a Phosphoserine; by CDK1. A Phosphothreonine; by CDK1 modification is found at threonine 191. At serine 192 the chain carries Phosphoserine; by CDK1. Residues proline 193–asparagine 255 are disordered. Over residues proline 219–glycine 254 the composition is skewed to acidic residues. Serine 268 is modified (phosphoserine; by CDK1). A Phosphoserine; by MPS1 and IPL1 modification is found at serine 269.

The protein belongs to the CENP-T/CNN1 family. In terms of assembly, component of the inner kinetochore constitutive centromere-associated network (CCAN) (also known as central kinetochore CTF19 complex in yeast), which is composed of at least AME1, CHL4, CNN1, CTF3, CTF19, IML3, MCM16, MCM21, MCM22, MHF1, MHF2, MIF2, NKP1, NKP2, OKP1 and WIP1. Interacts (via N-terminus) with the outer kinetochore NDC80 complex subunits SPC24 (via C-terminus) and SPC25 (via C-terminus); the interaction is direct and contributes to the correct spatiotemporal organization of the KMN network. Interacts with outer kinetochore MIS12 complex subunit NNF1. Interacts (via N-terminus) with the KNL1 complex. Phosphorylation of the C-terminus by MPS1 kinase regulates interaction with the outer kinetochore Ndc80 complex. Phosphorylation levels rise from S-phase and through metaphase, the protein is thendephosphorylated in anaphase.

It localises to the nucleus. The protein localises to the chromosome. It is found in the centromere. The protein resides in the kinetochore. Component of the kinetochore, a multiprotein complex that assembles on centromeric DNA and attaches chromosomes to spindle microtubules, mediating chromosome segregation and sister chromatid segregation during meiosis and mitosis. Component of the inner kinetochore constitutive centromere-associated network (CCAN), which serves as a structural platform for outer kinetochore assembly. Modulates outer kinetochore KMN network activity by regulating interactions within the network. The polypeptide is Inner kinetochore subunit CNN1 (CNN1) (Saccharomyces cerevisiae (strain ATCC 204508 / S288c) (Baker's yeast)).